A 448-amino-acid polypeptide reads, in one-letter code: Histidinol dehydrogenase (448 aa).

Residues Y136, Q197, and N220 each coordinate NAD(+). Substrate-binding residues include S243, Q265, and H268. Zn(2+) contacts are provided by Q265 and H268. Catalysis depends on proton acceptor residues E333 and H334. Positions 334, 367, 421, and 426 each coordinate substrate. D367 provides a ligand contact to Zn(2+). H426 serves as a coordination point for Zn(2+).

It belongs to the histidinol dehydrogenase family. It depends on Zn(2+) as a cofactor.

The enzyme catalyses L-histidinol + 2 NAD(+) + H2O = L-histidine + 2 NADH + 3 H(+). The protein operates within amino-acid biosynthesis; L-histidine biosynthesis; L-histidine from 5-phospho-alpha-D-ribose 1-diphosphate: step 9/9. Catalyzes the sequential NAD-dependent oxidations of L-histidinol to L-histidinaldehyde and then to L-histidine. This Pseudomonas savastanoi pv. phaseolicola (strain 1448A / Race 6) (Pseudomonas syringae pv. phaseolicola (strain 1448A / Race 6)) protein is Histidinol dehydrogenase.